The primary structure comprises 208 residues: AN1-type zinc finger protein 6 (208 aa).

The segment at 8–42 (SQVPMLCSTGCGFYGNPRTNGMCSVCYKEHLQRQN) adopts an A20-type zinc-finger fold. 4 residues coordinate Zn(2+): Cys-14, Cys-18, Cys-30, and Cys-33. Residues 41–110 (QNSSNGRISP…ASSQVDSTSV (70 aa)) form a disordered region. Ser-49 is modified (phosphoserine). Polar residues predominate over residues 54–68 (SVTSLSESLPVQCTD). A compositionally biased stretch (low complexity) spans 83–94 (SSVQPSPVSNQS). The segment covering 95–110 (LLSESVASSQVDSTSV) has biased composition (polar residues). The AN1-type zinc-finger motif lies at 143-189 (KQKKNRCFMCRKKVGLTGFECRCGNVYCGVHRYSDVHNCSYNYKADA). Positions 149, 152, 163, 165, 170, 173, 179, and 181 each coordinate Zn(2+). At Lys-204 the chain carries N6-acetyllysine.

In terms of assembly, interacts with PKN1.

The protein is AN1-type zinc finger protein 6 (ZFAND6) of Bos taurus (Bovine).